The primary structure comprises 364 residues: Probable dual-specificity RNA methyltransferase RlmN (364 aa).

Glu-107 serves as the catalytic Proton acceptor. Residues 113–346 (HEYGNSVCVT…ATIRREQGAD (234 aa)) form the Radical SAM core domain. Cys-120 and Cys-351 form a disulfide bridge. 3 residues coordinate [4Fe-4S] cluster: Cys-127, Cys-131, and Cys-134. S-adenosyl-L-methionine-binding positions include 177-178 (GE), Ser-209, 232-234 (SLH), and Asn-308. The S-methylcysteine intermediate role is filled by Cys-351.

This sequence belongs to the radical SAM superfamily. RlmN family. [4Fe-4S] cluster is required as a cofactor.

Its subcellular location is the cytoplasm. It carries out the reaction adenosine(2503) in 23S rRNA + 2 reduced [2Fe-2S]-[ferredoxin] + 2 S-adenosyl-L-methionine = 2-methyladenosine(2503) in 23S rRNA + 5'-deoxyadenosine + L-methionine + 2 oxidized [2Fe-2S]-[ferredoxin] + S-adenosyl-L-homocysteine. It catalyses the reaction adenosine(37) in tRNA + 2 reduced [2Fe-2S]-[ferredoxin] + 2 S-adenosyl-L-methionine = 2-methyladenosine(37) in tRNA + 5'-deoxyadenosine + L-methionine + 2 oxidized [2Fe-2S]-[ferredoxin] + S-adenosyl-L-homocysteine. Specifically methylates position 2 of adenine 2503 in 23S rRNA and position 2 of adenine 37 in tRNAs. Confers resistance to some classes of antibiotics. The chain is Probable dual-specificity RNA methyltransferase RlmN from Staphylococcus saprophyticus subsp. saprophyticus (strain ATCC 15305 / DSM 20229 / NCIMB 8711 / NCTC 7292 / S-41).